Consider the following 155-residue polypeptide: Probable calcium-binding protein CML44 (155 aa).

3 EF-hand domains span residues 6-41, 85-120, and 130-155; these read ITTNDLRRMFKTLDKNQDGLVTLDELLWILDKLGWA, DNDEAIARAFNVFDVNGDGYISAEELRDVLERLGFE, and RMIRVHDKNLDGFVDFEEFKNMILHV. The Ca(2+) site is built by Asp19, Asn21, Asp23, Glu30, Asp98, Asn100, Asp102, Tyr104, and Glu109.

Its function is as follows. Potential calcium sensor. This is Probable calcium-binding protein CML44 (CML44) from Arabidopsis thaliana (Mouse-ear cress).